Consider the following 267-residue polypeptide: Protein COFACTOR ASSEMBLY OF COMPLEX C SUBUNIT B CCB1, chloroplastic (267 aa).

A chloroplast-targeting transit peptide spans M1 to T44. Residues A45–L84 are Lumenal-facing. Residues A85–I105 form a helical membrane-spanning segment. Over K106–Q164 the chain is Stromal. Residues A165–I185 form a helical membrane-spanning segment. A topological domain (lumenal) is located at residue T186. Residues V187–Y207 traverse the membrane as a helical segment. Topologically, residues Y208–S267 are stromal.

Its subcellular location is the plastid. It localises to the chloroplast thylakoid membrane. Required for the biogenesis and accumulation of native cytochrome b6 in the thylakoid membrane. Controls the conversion of apocytochrome b6 to holocytochrome b6. Required for covalent binding of the c-type heme to cytochrome b6. This chain is Protein COFACTOR ASSEMBLY OF COMPLEX C SUBUNIT B CCB1, chloroplastic, found in Arabidopsis thaliana (Mouse-ear cress).